The following is a 277-amino-acid chain: Lectin 1 (277 aa).

The first 30 residues, 1-30, serve as a signal peptide directing secretion; that stretch reads MSFSSSNFYVILSISLTVFILLFNINKVNS. Asparagine 143 carries N-linked (GlcNAc...) asparagine glycosylation. Mn(2+) contacts are provided by glutamate 152 and aspartate 154. Positions 154, 158, and 161 each coordinate Ca(2+). Residues aspartate 161 and histidine 167 each coordinate Mn(2+). N-linked (GlcNAc...) asparagine glycosylation occurs at asparagine 269.

Belongs to the leguminous lectin family.

Functionally, lectin that may be involved in a cell recognition process. This is Lectin 1 (LEC1) from Medicago truncatula (Barrel medic).